A 367-amino-acid chain; its full sequence is Anhydro-N-acetylmuramic acid kinase (367 aa).

11–18 contacts ATP; the sequence is GTSLDGVD.

Belongs to the anhydro-N-acetylmuramic acid kinase family.

The catalysed reaction is 1,6-anhydro-N-acetyl-beta-muramate + ATP + H2O = N-acetyl-D-muramate 6-phosphate + ADP + H(+). It participates in amino-sugar metabolism; 1,6-anhydro-N-acetylmuramate degradation. Its pathway is cell wall biogenesis; peptidoglycan recycling. Its function is as follows. Catalyzes the specific phosphorylation of 1,6-anhydro-N-acetylmuramic acid (anhMurNAc) with the simultaneous cleavage of the 1,6-anhydro ring, generating MurNAc-6-P. Is required for the utilization of anhMurNAc either imported from the medium or derived from its own cell wall murein, and thus plays a role in cell wall recycling. This chain is Anhydro-N-acetylmuramic acid kinase, found in Chromobacterium violaceum (strain ATCC 12472 / DSM 30191 / JCM 1249 / CCUG 213 / NBRC 12614 / NCIMB 9131 / NCTC 9757 / MK).